A 588-amino-acid chain; its full sequence is NADP-dependent malic enzyme 2 (588 aa).

The tract at residues 1–21 (MGSTPTDLPGEDVADNRSGVG) is disordered. Residue G2 is modified to N-acetylglycine. Y136 serves as the catalytic Proton donor. R189 is a binding site for NADP(+). The Proton acceptor role is filled by K207. Residues E279, D280, and D303 each contribute to the a divalent metal cation site. Residues D303, 332–348 (LFLG…ELIA), and N444 each bind NADP(+).

The protein belongs to the malic enzymes family. In terms of assembly, homohexamers and homooctamers. It depends on Mg(2+) as a cofactor. Requires Mn(2+) as cofactor. Expressed in leaves, stems, flowers and roots. Particularly present in vasculatures, trichome basal cells and hydatodes.

Its subcellular location is the cytoplasm. It carries out the reaction (S)-malate + NADP(+) = pyruvate + CO2 + NADPH. The enzyme catalyses oxaloacetate + H(+) = pyruvate + CO2. Activated by coenzyme A (CoA), aspartate, succinate and fumarate. Repressed by oxaloacetate, glucose and ATP. The protein is NADP-dependent malic enzyme 2 (NADP-ME2) of Arabidopsis thaliana (Mouse-ear cress).